Here is a 576-residue protein sequence, read N- to C-terminus: (+)-alpha-terpineol synthase (576 aa).

Residues Arg286, Asp323, Asp327, Arg466, and Asn469 each contribute to the (2E)-geranyl diphosphate site. Mg(2+) is bound by residues Asp323 and Asp327. The DDXXD motif motif lies at 323 to 327 (DDVYD). Mg(2+) is bound by residues Asn469, Thr473, and Glu477.

Belongs to the terpene synthase family. Tpsb subfamily. Requires Mg(2+) as cofactor. The cofactor is Mn(2+).

The enzyme catalyses (2E,6E)-farnesyl diphosphate = beta-bisabolene + diphosphate. It catalyses the reaction (2E)-geranyl diphosphate + H2O = (R)-alpha-terpineol + diphosphate. The catalysed reaction is (2E)-geranyl diphosphate = (4S)-limonene + diphosphate. It participates in secondary metabolite biosynthesis; terpenoid biosynthesis. Monoterpene synthase which catalyzes the conversion of (2E)-geranyl diphosphate (GPP) to (R)-alpha-terpineol and (4S)-limonene, as well as small quantities of linalool, myrcene, (-)-alpha-pinene, (+)-sabinene and geraniol. To a lower extent, catalyzes the conversion of (2E,6E)-farnesyl diphosphate (FPP) to beta-bisabolene. The sequence is that of (+)-alpha-terpineol synthase from Santalum album (White sandalwood).